Consider the following 907-residue polypeptide: Protein translocase subunit SecA (907 aa).

ATP is bound by residues Gln87, Gly105–Thr109, and Asp506. Basic and acidic residues predominate over residues Leu834–Lys850. Residues Leu834–Glu907 are disordered. Residues Gln864 to Pro875 show a composition bias toward low complexity. Cys891, Cys893, Cys902, and His903 together coordinate Zn(2+). The span at Lys897–Glu907 shows a compositional bias: basic residues.

It belongs to the SecA family. In terms of assembly, monomer and homodimer. Part of the essential Sec protein translocation apparatus which comprises SecA, SecYEG and auxiliary proteins SecDF-YajC and YidC. It depends on Zn(2+) as a cofactor.

It is found in the cell inner membrane. The protein localises to the cytoplasm. The catalysed reaction is ATP + H2O + cellular proteinSide 1 = ADP + phosphate + cellular proteinSide 2.. Part of the Sec protein translocase complex. Interacts with the SecYEG preprotein conducting channel. Has a central role in coupling the hydrolysis of ATP to the transfer of proteins into and across the cell membrane, serving both as a receptor for the preprotein-SecB complex and as an ATP-driven molecular motor driving the stepwise translocation of polypeptide chains across the membrane. The polypeptide is Protein translocase subunit SecA (Alcanivorax borkumensis (strain ATCC 700651 / DSM 11573 / NCIMB 13689 / SK2)).